Consider the following 197-residue polypeptide: Beta-crystallin A2 (197 aa).

An N-terminal arm region spans residues 1–11 (MSSAPAPGPAP). 2 consecutive Beta/gamma crystallin 'Greek key' domains span residues 12–52 (ASLT…KVEN) and 53–99 (GVWV…RPVL). Residues 100 to 105 (CANHND) form a connecting peptide region. 2 Beta/gamma crystallin 'Greek key' domains span residues 106–147 (SRVT…KVSS) and 148–196 (GAWV…RRVQ).

Belongs to the beta/gamma-crystallin family. Homo/heterodimer, or complexes of higher-order. The structure of beta-crystallin oligomers seems to be stabilized through interactions between the N-terminal arms.

Its function is as follows. Crystallins are the dominant structural components of the vertebrate eye lens. In Homo sapiens (Human), this protein is Beta-crystallin A2 (CRYBA2).